The chain runs to 522 residues: Calcium-dependent protein kinase 4 (522 aa).

Over residues 1-10 the composition is skewed to polar residues; the sequence is MGACFSSHTA. Residues 1 to 43 are disordered; the sequence is MGACFSSHTATAAADGGSGKRQQRKGDHKGKLPDGGGGEKEKE. Gly-2 is lipidated: N-myristoyl glycine. Residues 29–43 are compositionally biased toward basic and acidic residues; sequence KGKLPDGGGGEKEKE. The Protein kinase domain occupies 59–319; that stretch reads YQVGRLLGHG…AAQALSHPWV (261 aa). Residues 65-73 and Lys-88 each bind ATP; that span reads LGHGQFGYT. Residue Asp-185 is the Proton acceptor of the active site. Residues 325–355 form an autoinhibitory domain region; the sequence is ASEIPVDISVLSNMRQFVKYSRFKQFALRAL. EF-hand domains lie at 362-397, 399-434, 441-476, and 481-508; these read EELA…DLPW, LKGP…IHQM, RWGL…GLKG, and LLEE…ASMS. Residues Asp-375, Asp-377, Ser-379, Ser-381, Glu-386, Asp-412, Asn-414, Asp-416, Glu-423, Asp-454, Asp-456, Asp-458, Tyr-460, Glu-465, Asp-486, Asp-488, Asp-490, Arg-492, and Glu-497 each coordinate Ca(2+).

This sequence belongs to the protein kinase superfamily. Ser/Thr protein kinase family. CDPK subfamily.

The protein resides in the membrane. The catalysed reaction is L-seryl-[protein] + ATP = O-phospho-L-seryl-[protein] + ADP + H(+). The enzyme catalyses L-threonyl-[protein] + ATP = O-phospho-L-threonyl-[protein] + ADP + H(+). Its activity is regulated as follows. Activated by calcium. Autophosphorylation may play an important role in the regulation of the kinase activity. In terms of biological role, may play a role in signal transduction pathways that involve calcium as a second messenger. This chain is Calcium-dependent protein kinase 4, found in Oryza sativa subsp. japonica (Rice).